A 510-amino-acid polypeptide reads, in one-letter code: Calmodulin-binding receptor-like cytoplasmic kinase 3 (510 aa).

The first 30 residues, 1–30 (MGGDDLSFTRLVITALFGLLMLLQIKETSA), serve as a signal peptide directing secretion. A compositionally biased stretch (polar residues) spans 166–178 (VSSFEMSPSSEKI). Positions 166–209 (VSSFEMSPSSEKIPQSPFRAPPSPSRVPQSPSRYAMSPRPSRLG) are disordered. Thr214 carries the post-translational modification Phosphothreonine. The Protein kinase domain occupies 225-499 (FADSHQIGEG…MEAVGKQLWA (275 aa)). ATP is bound by residues 231–239 (IGEGGFGVV) and Lys253. The interval 240-265 (FKGVLDDGQVVAIKRAKKEHFENLRT) is caM-binding. Asp350 serves as the catalytic Proton acceptor. Ser354 is subject to Phosphoserine. Phosphothreonine occurs at positions 386 and 391. At Tyr399 the chain carries Phosphotyrosine.

The protein belongs to the protein kinase superfamily. Ser/Thr protein kinase family. In terms of assembly, interacts with calmodulin (CaM) in a Ca(2+)-dependent manner.

Its subcellular location is the cytoplasm. It catalyses the reaction L-seryl-[protein] + ATP = O-phospho-L-seryl-[protein] + ADP + H(+). The enzyme catalyses L-threonyl-[protein] + ATP = O-phospho-L-threonyl-[protein] + ADP + H(+). This Arabidopsis thaliana (Mouse-ear cress) protein is Calmodulin-binding receptor-like cytoplasmic kinase 3 (CRCK3).